The primary structure comprises 249 residues: uncharacterized protein (249 aa).

This is an uncharacterized protein from Colorado tick fever virus (strain USA/Florio N-7180) (CTFV).